A 465-amino-acid polypeptide reads, in one-letter code: Cysteine--tRNA ligase (465 aa).

Zn(2+) is bound at residue C30. Residues 32–42 carry the 'HIGH' region motif; sequence ITVYDYCHVGH. C214, H239, and E243 together coordinate Zn(2+). A 'KMSKS' region motif is present at residues 271-275; that stretch reads KMSKS. K274 serves as a coordination point for ATP.

This sequence belongs to the class-I aminoacyl-tRNA synthetase family. As to quaternary structure, monomer. Zn(2+) is required as a cofactor.

The protein resides in the cytoplasm. The enzyme catalyses tRNA(Cys) + L-cysteine + ATP = L-cysteinyl-tRNA(Cys) + AMP + diphosphate. In Burkholderia cenocepacia (strain HI2424), this protein is Cysteine--tRNA ligase.